Consider the following 193-residue polypeptide: DNA damage-inducible transcript 4-like protein (193 aa).

It belongs to the DDIT4 family. Up-regulated in atherosclerotic plaques relative to healthy segments of the same artery.

It is found in the cytoplasm. In terms of biological role, inhibits cell growth by regulating the TOR signaling pathway upstream of the TSC1-TSC2 complex and downstream of AKT1. The chain is DNA damage-inducible transcript 4-like protein (DDIT4L) from Homo sapiens (Human).